The primary structure comprises 73 residues: MTRILLLLLTFYRYFISPLLGGNNCRFYPTCSKYAKEALNTHGGIKGLWLIFKRIIKCQPLCDGGYDPVPPTK.

The protein belongs to the UPF0161 family.

Its subcellular location is the cell inner membrane. Could be involved in insertion of integral membrane proteins into the membrane. In Rickettsia bellii (strain OSU 85-389), this protein is Putative membrane protein insertion efficiency factor.